Consider the following 121-residue polypeptide: Small ribosomal subunit protein uS13 (121 aa).

The tract at residues 91-121 (HRKGLPMRGQRTRTNARTRKGPRKAGVALKK) is disordered.

Belongs to the universal ribosomal protein uS13 family. Part of the 30S ribosomal subunit. Forms a loose heterodimer with protein S19. Forms two bridges to the 50S subunit in the 70S ribosome.

Its function is as follows. Located at the top of the head of the 30S subunit, it contacts several helices of the 16S rRNA. In the 70S ribosome it contacts the 23S rRNA (bridge B1a) and protein L5 of the 50S subunit (bridge B1b), connecting the 2 subunits; these bridges are implicated in subunit movement. Contacts the tRNAs in the A and P-sites. The sequence is that of Small ribosomal subunit protein uS13 from Cupriavidus necator (strain ATCC 17699 / DSM 428 / KCTC 22496 / NCIMB 10442 / H16 / Stanier 337) (Ralstonia eutropha).